Reading from the N-terminus, the 459-residue chain is Argininosuccinate lyase (459 aa).

This sequence belongs to the lyase 1 family. Argininosuccinate lyase subfamily.

It is found in the cytoplasm. It carries out the reaction 2-(N(omega)-L-arginino)succinate = fumarate + L-arginine. It functions in the pathway amino-acid biosynthesis; L-arginine biosynthesis; L-arginine from L-ornithine and carbamoyl phosphate: step 3/3. This is Argininosuccinate lyase from Buchnera aphidicola subsp. Schizaphis graminum (strain Sg).